The primary structure comprises 342 residues: Heat-inducible transcription repressor HrcA (342 aa).

It belongs to the HrcA family.

Negative regulator of class I heat shock genes (grpE-dnaK-dnaJ and groELS operons). Prevents heat-shock induction of these operons. The protein is Heat-inducible transcription repressor HrcA of Dechloromonas aromatica (strain RCB).